The following is a 453-amino-acid chain: Aryl hydrocarbon receptor nuclear translocator homolog (453 aa).

Residues 44-97 (FARENHSEIERRRRNKMTHYINELAEMVPQCASLGRKPDKLTILRMAVSHMKGI) form the bHLH domain. 2 consecutive PAS domains span residues 115–193 (DQEL…LDLK) and 277–347 (ASMP…LSDQ). One can recognise a PAC domain in the interval 348 to 392 (PMRINIRVRTSTDYIPCTVSAYKFMNPYSEQFEYVVATHQIAPQE). A disordered region spans residues 410 to 453 (EFGELGGAPSAVDYGQSSSGGWRPEAQGAPQAQWQWDPMNGYNQ).

As to quaternary structure, interacts with hif-1. Heterodimer; efficient DNA binding requires dimerization with another bHLH protein. Forms a heterodimer with ahr-1; binds DNA as heterodimer. Forms a heterodimer with PAS domain-containing protein cky-1; binds DNA as heterodimer. As to expression, expressed in many cell types throughout development, including hypodermal cells, intestinal cells, pharyngeal cells, and neurons. Expressed in every cell during embryo.

Its subcellular location is the nucleus. Transcription factor. Efficient DNA binding requires dimerization with another bHLH protein, such as cky-1 or ahr-1. Regulates transcription of target genes, probably acting in complex with cky-1. Has a role in cellular differentiation. Required for pharyngeal development. In collaboration with ahr-1 it is involved in RMEL/R and SDQR neuron cell migration. Acts in the cellular response to hypoxia. Involved in aggregation behavior by regulating soluble guanylate cyclase gene expression in the URX neurons. The sequence is that of Aryl hydrocarbon receptor nuclear translocator homolog from Caenorhabditis elegans.